The following is a 262-amino-acid chain: 5'-nucleotidase SurE (262 aa).

4 residues coordinate a divalent metal cation: Asp-8, Asp-9, Ser-40, and Asn-92.

It belongs to the SurE nucleotidase family. A divalent metal cation is required as a cofactor.

The protein resides in the cytoplasm. The catalysed reaction is a ribonucleoside 5'-phosphate + H2O = a ribonucleoside + phosphate. In terms of biological role, nucleotidase that shows phosphatase activity on nucleoside 5'-monophosphates. The chain is 5'-nucleotidase SurE from Xylella fastidiosa (strain M23).